A 237-amino-acid polypeptide reads, in one-letter code: Periplasmic deoxyribonuclease (237 aa).

The first 27 residues, 1–27, serve as a signal peptide directing secretion; sequence MSRPSRVLGLPLLSLGLTLLVSTPLQA.

The protein belongs to the EndA/NucM nuclease family.

It is found in the periplasm. Endonuclease which is capable of degrading plasmid DNA. The chain is Periplasmic deoxyribonuclease (dnsH) from Aeromonas hydrophila.